A 329-amino-acid polypeptide reads, in one-letter code: Anthranilate phosphoribosyltransferase (329 aa).

5-phospho-alpha-D-ribose 1-diphosphate is bound by residues Gly-78, 81–82 (GD), Thr-86, 88–91 (NLST), 106–114 (KHGNRSASG), and Ser-118. Residue Gly-78 participates in anthranilate binding. Ser-90 lines the Mg(2+) pocket. Residue Asn-109 coordinates anthranilate. Position 164 (Arg-164) interacts with anthranilate. The Mg(2+) site is built by Asp-221 and Glu-222.

This sequence belongs to the anthranilate phosphoribosyltransferase family. As to quaternary structure, homodimer. Mg(2+) is required as a cofactor.

It catalyses the reaction N-(5-phospho-beta-D-ribosyl)anthranilate + diphosphate = 5-phospho-alpha-D-ribose 1-diphosphate + anthranilate. Its pathway is amino-acid biosynthesis; L-tryptophan biosynthesis; L-tryptophan from chorismate: step 2/5. Its function is as follows. Catalyzes the transfer of the phosphoribosyl group of 5-phosphorylribose-1-pyrophosphate (PRPP) to anthranilate to yield N-(5'-phosphoribosyl)-anthranilate (PRA). In Pyrobaculum islandicum (strain DSM 4184 / JCM 9189 / GEO3), this protein is Anthranilate phosphoribosyltransferase.